A 173-amino-acid polypeptide reads, in one-letter code: Ribulose bisphosphate carboxylase small subunit, chloroplastic 5 (173 aa).

The N-terminal 49 residues, M1–Q49, are a transit peptide targeting the chloroplast.

It belongs to the RuBisCO small chain family. Heterohexadecamer of 8 large and 8 small subunits.

The protein localises to the plastid. It is found in the chloroplast. Functionally, ruBisCO catalyzes two reactions: the carboxylation of D-ribulose 1,5-bisphosphate, the primary event in carbon dioxide fixation, as well as the oxidative fragmentation of the pentose substrate. Both reactions occur simultaneously and in competition at the same active site. Although the small subunit is not catalytic it is essential for maximal activity. This is Ribulose bisphosphate carboxylase small subunit, chloroplastic 5 from Flaveria pringlei.